Here is a 318-residue protein sequence, read N- to C-terminus: Molybdenum cofactor insertion chaperone PaoD (318 aa).

In terms of assembly, homodimer in solution. Interacts with MocA.

Its function is as follows. Chaperone required for the production of an active PaoABC aldehyde oxidoreductase. Stabilizes the PaoC subunit and is required for the insertion of the molybdenum cofactor into this subunit. Binds molybdenum cofactor. Binds the molybdopterin cytosine dinucleotide (MCD) form of the cofactor after its formation by the molybdenum cofactor cytidylyltransferase MocA. This chain is Molybdenum cofactor insertion chaperone PaoD, found in Escherichia coli (strain K12).